A 120-amino-acid polypeptide reads, in one-letter code: ESAT-6-like protein EsxQ (120 aa).

This sequence belongs to the WXG100 family. ESAT-6 subfamily.

It localises to the secreted. The protein is ESAT-6-like protein EsxQ of Mycobacterium bovis (strain ATCC BAA-935 / AF2122/97).